Consider the following 68-residue polypeptide: Protein BRICK1 (68 aa).

Residues 37–62 are a coiled coil; that stretch reads STRNKLSDLNEKLTILDRQVDYLEAT.

It belongs to the BRK1 family. As to quaternary structure, part of a Scar/WAVE complex containing brk1, scrA, abiA, pirA and napA. Interacts with scrA.

The protein localises to the cytoplasm. Its subcellular location is the cytoskeleton. Involved in regulation of actin and microtubule organization. The polypeptide is Protein BRICK1 (brk1) (Dictyostelium discoideum (Social amoeba)).